We begin with the raw amino-acid sequence, 390 residues long: S-adenosylmethionine synthase 3 (390 aa).

Residue Glu9 coordinates Mg(2+). Residue His15 coordinates ATP. Position 43 (Glu43) interacts with K(+). 2 residues coordinate L-methionine: Glu56 and Gln99. ATP contacts are provided by residues 167–169, 235–238, Asp246, 252–253, Ala269, Lys273, and Lys277; these read DGK, SGRF, and RK. Asp246 provides a ligand contact to L-methionine. Lys277 is an L-methionine binding site.

The protein belongs to the AdoMet synthase family. As to quaternary structure, homotetramer. Mn(2+) is required as a cofactor. Requires Mg(2+) as cofactor. The cofactor is Co(2+). K(+) serves as cofactor. It depends on NH4(+) as a cofactor. As to expression, mostly expressed in roots, and, to a lower extent, in hypocotyls and cotyledons.

It localises to the cytoplasm. It catalyses the reaction L-methionine + ATP + H2O = S-adenosyl-L-methionine + phosphate + diphosphate. The protein operates within amino-acid biosynthesis; S-adenosyl-L-methionine biosynthesis; S-adenosyl-L-methionine from L-methionine: step 1/1. Inhibited by products of SAMS reaction (SAM, Pi, PPi), substrate analogs (cycloleucine and ethionine), and alternative nucleotides (GTP, CTP and ADP). Strongly repressed by PPPi. Catalyzes the formation of S-adenosylmethionine from methionine and ATP. The reaction comprises two steps that are both catalyzed by the same enzyme: formation of S-adenosylmethionine (AdoMet) and triphosphate, and subsequent hydrolysis of the triphosphate. This chain is S-adenosylmethionine synthase 3 (SAMS3), found in Catharanthus roseus (Madagascar periwinkle).